The primary structure comprises 273 residues: Urease accessory protein UreD (273 aa).

The protein belongs to the UreD family. UreD, UreF and UreG form a complex that acts as a GTP-hydrolysis-dependent molecular chaperone, activating the urease apoprotein by helping to assemble the nickel containing metallocenter of UreC. The UreE protein probably delivers the nickel.

The protein resides in the cytoplasm. Its function is as follows. Required for maturation of urease via the functional incorporation of the urease nickel metallocenter. The sequence is that of Urease accessory protein UreD from Rhizobium leguminosarum bv. viciae.